An 839-amino-acid chain; its full sequence is Phosphatidylinositol-glycan-specific phospholipase D (839 aa).

The N-terminal stretch at 1–23 (MSAFRFWSGLLMLLGFLCPRSSP) is a signal peptide. 5 N-linked (GlcNAc...) asparagine glycosylation sites follow: Asn-94, Asn-271, Asn-292, Asn-307, and Asn-321. FG-GAP repeat units follow at residues 365-427 (SSPA…GLPR), 434-496 (KEAH…GQLS), 498-558 (SPNV…YSSR), 562-622 (NVEA…SPGR), 632-692 (QSWF…GSTR), 703-769 (SLLS…TVGD), and 787-839 (QYVL…LGQD). 3 N-linked (GlcNAc...) asparagine glycosylation sites follow: Asn-500, Asn-590, and Asn-658.

The protein belongs to the GPLD1 family. As to quaternary structure, monomer. Glycosylated.

The protein localises to the secreted. The catalysed reaction is a 6-(alpha-D-glucosaminyl)-1-(1,2-diacyl-sn-glycero-3-phospho)-1D-myo-inositol + H2O = 6-(alpha-D-glucosaminyl)-1D-myo-inositol + a 1,2-diacyl-sn-glycero-3-phosphate + H(+). Functionally, this protein hydrolyzes the inositol phosphate linkage in proteins anchored by phosphatidylinositol glycans (GPI-anchor) thus releasing these proteins from the membrane. This chain is Phosphatidylinositol-glycan-specific phospholipase D (GPLD1), found in Bos taurus (Bovine).